Reading from the N-terminus, the 435-residue chain is Zinc metalloproteinase/disintegrin (435 aa).

Positions 1-26 (KMCGVTQNWESYESTKKASQLNLTPE) are excised as a propeptide. Pyrrolidone carboxylic acid is present on glutamine 27. Residues 33–227 (RYIKLGIFVD…HNFQCILNAP (195 aa)) form the Peptidase M12B domain. A glycan (N-linked (GlcNAc...) asparagine) is linked at asparagine 115. Disulfide bonds link cysteine 144/cysteine 222, cysteine 184/cysteine 206, and cysteine 186/cysteine 189. Histidine 169 provides a ligand contact to Zn(2+). The active site involves glutamate 170. Residues histidine 173 and histidine 179 each coordinate Zn(2+). Residues 228–243 (LRTDTVSTPVSGNELL) constitute a propeptide that is removed on maturation. Positions 235-318 (TPVSGNELLE…DCPTDDFHRN (84 aa)) constitute a Disintegrin domain. Ca(2+)-binding residues include valine 237, asparagine 240, leucine 242, glutamate 244, glutamate 247, and aspartate 250. Cystine bridges form between cysteine 249/cysteine 264, cysteine 251/cysteine 259, cysteine 258/cysteine 281, cysteine 272/cysteine 278, cysteine 277/cysteine 303, and cysteine 290/cysteine 310. Residues 296–298 (ECD) carry the D/ECD-tripeptide motif.

This sequence belongs to the venom metalloproteinase (M12B) family. P-III subfamily. P-IIIb sub-subfamily. As to quaternary structure, monomer. It depends on Zn(2+) as a cofactor. The N-terminus of the metalloproteinase is blocked. Expressed by the venom gland.

The protein localises to the secreted. With respect to regulation, inhibited by EDTA. Its function is as follows. Cleaves the alpha chain of fibrinogen (FGA) preferentially and cleaves the beta chain (FGB) either on longer incubation or at high concentrations. Induces apoptosis of endothelial cells (prior to cell detachment). Functionally, disintegrin: inhibits platelet aggregation induced by ADP, thrombin, platelet-activating factor and collagen. Acts by inhibiting fibrinogen interaction with platelet receptors GPIIb/GPIIIa (ITGA2B/ITGB3). The sequence is that of Zinc metalloproteinase/disintegrin from Craspedocephalus gramineus (Bamboo pit viper).